The primary structure comprises 418 residues: Odorant receptor 13a (418 aa).

The Cytoplasmic portion of the chain corresponds to 1–38 (MFYSYPYKALSFPIQCVWLKLNGSWPLTESSRPWRSQS). Residues 39–59 (LLATAYIVWAWYVIASVGITI) form a helical membrane-spanning segment. Topologically, residues 60-70 (SYQTAFLLNNL) are extracellular. A glycan (N-linked (GlcNAc...) asparagine) is linked at N69. A helical membrane pass occupies residues 71 to 91 (SDIIITTENCCTTFMGVLNFV). Residues 92–140 (RLIHLRLNQRKFRQLIENFSYEIWIPNSSKNNVAAECRRRMVTFSIMTS) lie on the Cytoplasmic side of the membrane. Residues 141 to 161 (LLACLIIMYCVLPLVEIFFGP) traverse the membrane as a helical segment. Residues 162–195 (AFDAQNKPFPYKMIFPYDAQSSWIRYVMTYIFTS) are Extracellular-facing. A helical transmembrane segment spans residues 196-216 (YAGICVVTTLFAEDTILGFFI). Residues 217 to 273 (TYTCGQFHLLHQRIAGLFAGSNAELAESIQLERLKRIVEKHNNIISFAKRLEDFFNP) lie on the Cytoplasmic side of the membrane. A helical membrane pass occupies residues 274–294 (ILLANLMISSVLICMVGFQIV). The Extracellular portion of the chain corresponds to 295 to 299 (TGKNM). Residues 300–320 (FIGDYVKFIIYISSALSQLYV) form a helical membrane-spanning segment. Residues 321–385 (LCENGDALIK…PVRITAFKFS (65 aa)) lie on the Cytoplasmic side of the membrane. Residues 386-406 (TLSLQSFTAILSTSISYFTLL) traverse the membrane as a helical segment. Over 407–418 (RSVYFDDEKKLD) the chain is Extracellular.

This sequence belongs to the insect chemoreceptor superfamily. Heteromeric odorant receptor channel (TC 1.A.69) family. Or1a subfamily. In terms of assembly, interacts with Orco. Complexes exist early in the endomembrane system in olfactory sensory neurons (OSNs), coupling these complexes to the conserved ciliary trafficking pathway. In terms of tissue distribution, expressed in olfactory sensory neurons in the antenna.

It is found in the cell membrane. Functionally, odorant receptor which mediates acceptance or avoidance behavior, depending on its substrates. The odorant receptor repertoire encodes a large collection of odor stimuli that vary widely in identity, intensity, and duration. May form a complex with Orco to form odorant-sensing units, providing sensitive and prolonged odorant signaling and calcium permeability. Involved in the behavioral responses to octanol, nonanol, and pentyl acetate. The sequence is that of Odorant receptor 13a (Or13a) from Drosophila melanogaster (Fruit fly).